Consider the following 419-residue polypeptide: S-adenosylmethionine synthase (419 aa).

His-14 provides a ligand contact to ATP. Asp-16 lines the Mg(2+) pocket. Glu-42 provides a ligand contact to K(+). The L-methionine site is built by Glu-55 and Gln-98. Residues 98-108 (QSADINQGVDR) form a flexible loop region. ATP is bound by residues 164 to 166 (DAK), 242 to 243 (KF), Asp-251, 257 to 258 (RK), Ala-274, and Lys-278. Asp-251 lines the L-methionine pocket. Residue Lys-282 participates in L-methionine binding.

The protein belongs to the AdoMet synthase family. In terms of assembly, homotetramer; dimer of dimers. Mg(2+) serves as cofactor. K(+) is required as a cofactor.

Its subcellular location is the cytoplasm. It carries out the reaction L-methionine + ATP + H2O = S-adenosyl-L-methionine + phosphate + diphosphate. It functions in the pathway amino-acid biosynthesis; S-adenosyl-L-methionine biosynthesis; S-adenosyl-L-methionine from L-methionine: step 1/1. In terms of biological role, catalyzes the formation of S-adenosylmethionine (AdoMet) from methionine and ATP. The overall synthetic reaction is composed of two sequential steps, AdoMet formation and the subsequent tripolyphosphate hydrolysis which occurs prior to release of AdoMet from the enzyme. The protein is S-adenosylmethionine synthase of Cytophaga hutchinsonii (strain ATCC 33406 / DSM 1761 / CIP 103989 / NBRC 15051 / NCIMB 9469 / D465).